The primary structure comprises 442 residues: Tryptophan synthase beta chain 2 (442 aa).

Residue K110 is modified to N6-(pyridoxal phosphate)lysine.

It belongs to the TrpB family. As to quaternary structure, tetramer of two alpha and two beta chains. Pyridoxal 5'-phosphate is required as a cofactor.

The catalysed reaction is (1S,2R)-1-C-(indol-3-yl)glycerol 3-phosphate + L-serine = D-glyceraldehyde 3-phosphate + L-tryptophan + H2O. Its pathway is amino-acid biosynthesis; L-tryptophan biosynthesis; L-tryptophan from chorismate: step 5/5. Its function is as follows. The beta subunit is responsible for the synthesis of L-tryptophan from indole and L-serine. This Thermococcus kodakarensis (strain ATCC BAA-918 / JCM 12380 / KOD1) (Pyrococcus kodakaraensis (strain KOD1)) protein is Tryptophan synthase beta chain 2.